The primary structure comprises 662 residues: Probable protein phosphatase 2C 4 (662 aa).

Phosphoserine is present on serine 153. The PPM-type phosphatase domain occupies 249-653 (DVSLENQNLQ…DDVSIVVISL (405 aa)). Residues aspartate 286, glycine 287, aspartate 581, and aspartate 644 each contribute to the Mn(2+) site.

It belongs to the PP2C family. Mg(2+) is required as a cofactor. It depends on Mn(2+) as a cofactor. Expressed in seedlings, roots, leaves, stems, young inflorescences, flowers and siliques.

The protein localises to the nucleus. The enzyme catalyses O-phospho-L-seryl-[protein] + H2O = L-seryl-[protein] + phosphate. It carries out the reaction O-phospho-L-threonyl-[protein] + H2O = L-threonyl-[protein] + phosphate. Its function is as follows. Involved in leaf development regulation. This Arabidopsis thaliana (Mouse-ear cress) protein is Probable protein phosphatase 2C 4 (PLL5).